The primary structure comprises 222 residues: 2-hydroxypent-2,4-dienoate hydratase (222 aa).

It belongs to the hydratase/decarboxylase family.

It participates in aromatic compound metabolism; benzoate degradation via hydroxylation. In terms of biological role, conversion of 2-hydroxypent-2,4-dienoate into 4-hydroxy-2-oxopentanoate. The sequence is that of 2-hydroxypent-2,4-dienoate hydratase (xylJ) from Pseudomonas putida (Arthrobacter siderocapsulatus).